We begin with the raw amino-acid sequence, 502 residues long: Lipoyl synthase, apicoplast (502 aa).

Residues 1–16 form the signal peptide; the sequence is MNFLVLFFSYSIFVLP. Residues cysteine 192, cysteine 197, cysteine 203, cysteine 218, cysteine 222, cysteine 225, and serine 433 each contribute to the [4Fe-4S] cluster site. One can recognise a Radical SAM core domain in the interval 204 to 422; that stretch reads WNIGTATIML…KDVGLKMGFK (219 aa).

The protein belongs to the radical SAM superfamily. Lipoyl synthase family. [4Fe-4S] cluster serves as cofactor.

Its subcellular location is the plastid. The protein resides in the apicoplast. The enzyme catalyses [[Fe-S] cluster scaffold protein carrying a second [4Fe-4S](2+) cluster] + N(6)-octanoyl-L-lysyl-[protein] + 2 oxidized [2Fe-2S]-[ferredoxin] + 2 S-adenosyl-L-methionine + 4 H(+) = [[Fe-S] cluster scaffold protein] + N(6)-[(R)-dihydrolipoyl]-L-lysyl-[protein] + 4 Fe(3+) + 2 hydrogen sulfide + 2 5'-deoxyadenosine + 2 L-methionine + 2 reduced [2Fe-2S]-[ferredoxin]. It functions in the pathway protein modification; protein lipoylation via endogenous pathway; protein N(6)-(lipoyl)lysine from octanoyl-[acyl-carrier-protein]: step 2/2. In terms of biological role, catalyzes the radical-mediated insertion of two sulfur atoms into the C-6 and C-8 positions of the octanoyl moiety bound to the lipoyl domains of lipoate-dependent enzymes, thereby converting the octanoylated domains into lipoylated derivatives. The chain is Lipoyl synthase, apicoplast from Plasmodium yoelii yoelii.